We begin with the raw amino-acid sequence, 320 residues long: Malate dehydrogenase (320 aa).

NAD(+) contacts are provided by residues 10 to 15 and Asp-34; that span reads GSGMIG. Substrate is bound by residues Arg-83 and Arg-89. Residues Asn-96 and 119 to 121 contribute to the NAD(+) site; that span reads ITN. The substrate site is built by Asn-121 and Arg-152. His-176 functions as the Proton acceptor in the catalytic mechanism.

The protein belongs to the LDH/MDH superfamily. MDH type 3 family.

The catalysed reaction is (S)-malate + NAD(+) = oxaloacetate + NADH + H(+). Functionally, catalyzes the reversible oxidation of malate to oxaloacetate. This chain is Malate dehydrogenase, found in Rhizobium meliloti (strain 1021) (Ensifer meliloti).